We begin with the raw amino-acid sequence, 371 residues long: MAIDEQIPRVQRALIQSSTPGVLQFTETREVPKLLPDQVLVRVVAVALNPCDWKMPTNFPCPGAGVGADFSGTVVRVGDDVRPGKFDVKLGDRVAGAVHASNRLKPQDGTFAEYIAVRADALWRIPDGMDFHVAAAIGLCVVGTVGLAAFHERHLNLPGSPEQPVKPRAGGQPPWVLVYGGSTASGTMAIQILKLAGFRVVTTCSPANFALVESYGADKAFDYHSPNLGESIRAYTNNSLSFVMDIIASANSLRQCYASIGRAGGHYVGFELVPDELAGIRKAVRASWVLGIRLLGYEIALDRGYGSPPDPELGMWGRAWFKRTEDLVWGGKIRPHPIELDTESGFDGIVAGVERLKRGEVSGKKLVYLIR.

51 to 54 (CDWK) provides a ligand contact to NADP(+). 140-147 (CVVGTVGL) serves as a coordination point for substrate. NADP(+)-binding positions include 182–185 (STAS), 205–208 (SPAN), Tyr-223, and 270–271 (FE). 291 to 295 (GIRLL) provides a ligand contact to substrate. An NADP(+)-binding site is contributed by 361 to 362 (VS).

This sequence belongs to the zinc-containing alcohol dehydrogenase family. Monomer.

It catalyses the reaction L-leucine + 8 malonyl-CoA + 4 S-adenosyl-L-methionine + ATP + 9 NADPH + 12 H(+) = (5S)-5-(2-methylpropyl)-3-[(2E,6R,8E,10E,12E)-6,8,10,12-tetramethyltetradeca-2,8,10,12-tetraenoyl]-2,5-dihydro-1H-pyrrol-2-one + AMP + 4 S-adenosyl-L-homocysteine + 8 CO2 + diphosphate + 9 NADP(+) + 8 CoA + 7 H2O. Its pathway is mycotoxin biosynthesis. In terms of biological role, trans-enoyl reductase; part of the gene cluster that mediates the biosynthesis of myceliothermophins, mycotoxins that contain a trans-fused decalin ring system connected to a conjugated 3-pyrrolin-2-one moiety and that have potential anti-tumor properties. The polyketide synthase module (PKS) of the PKS-NRPS mycA is responsible for the synthesis of the octaketide backbone. The downstream nonribosomal peptide synthetase (NRPS) module then amidates the carboxyl end of the octaketide with a leucine. A reductase-like domain (R) at the C-terminus catalyzes the reductive release of the polyketide-amino acid intermediate. Because mycA lacks a designated enoylreductase (ER) domain, the required activity is provided the enoyl reductase mycC. Following mycA-catalyzed construction and release of aminoacyl polyketide aldehyde, Knoevenagel condensation yields the expected ketone. This C18 keto acyclic precursor is the substrate of the Diels-Alderase mycB, that catalyzes the Diels-Alder cycloaddition to produce myceliothermophin E. A yet unknown oxygenase involved in the production of myceliothermophin A, via substitution with a hydroxyl group at the C21, has still to be identified. The chain is Trans-enoyl reductase mycC from Thermothelomyces thermophilus (strain ATCC 42464 / BCRC 31852 / DSM 1799) (Sporotrichum thermophile).